Reading from the N-terminus, the 503-residue chain is Probable inactive beta-glucosidase 33 (503 aa).

The first 30 residues, methionine 1–alanine 30, serve as a signal peptide directing secretion. A beta-D-glucoside-binding positions include glutamine 50, histidine 150, and asparagine 195–glutamine 196. An intrachain disulfide couples cysteine 215 to cysteine 223. Asparagine 222 carries an N-linked (GlcNAc...) asparagine glycan. A beta-D-glucoside contacts are provided by tyrosine 339 and glutamate 399. Glutamate 399 functions as the Nucleophile in the catalytic mechanism. N-linked (GlcNAc...) asparagine glycosylation is present at asparagine 436. Residues tryptophan 446, glutamate 453–phenylalanine 454, and phenylalanine 462 contribute to the a beta-D-glucoside site.

The protein belongs to the glycosyl hydrolase 1 family.

This is Probable inactive beta-glucosidase 33 (BGLU33) from Oryza sativa subsp. japonica (Rice).